The sequence spans 208 residues: MGLMHRVLLLATFALLCMHAKAAGFDHDKVPRTVERGGGARQLRTATMSDDEARVSKLPSFIESFVKNRKIESWIQNKVTDDFVLSELKLVRLPGTSLADDPNFKLFQKFKIGGWLEEKATTTKAWENLGLDSLPFDQVSKIDEFKTYTQYVTVLNKKASKLDIDQWHGLLSGGSPEELMAKAMILRTLGRDVLERRVMLGGHVVVPF.

Residues 1 to 22 (MGLMHRVLLLATFALLCMHAKA) form the signal peptide. The short motif at 41 to 54 (RQLRTATMSDDEAR) is the RxLR-dEER element. Residues 70 to 92 (KIESWIQNKVTDDFVLSELKLVR) are W1-motif. The tract at residues 93 to 110 (LPGTSLADDPNFKLFQKF) is linker region ln1. Positions 111-136 (KIGGWLEEKATTTKAWENLGLDSLPF) are W2-motif. Residues 137–157 (DQVSKIDEFKTYTQYVTVLNK) form a Y-motif region. The segment at 158-170 (KASKLDIDQWHGL) is linker region ln2. Positions 170 to 208 (LLSGGSPEELMAKAMILRTLGRDVLERRVMLGGHVVVPF) are T-region.

The protein belongs to the RxLR effector family. In terms of assembly, interacts with host exocyst component Sec5.

Its subcellular location is the secreted. The protein resides in the host cytoplasm. It localises to the host nucleus. It is found in the host peroxisome. Its function is as follows. Secreted effector that acts as an elicitor of hypersensitive response (HR) specifically on plants carrying defense protein R1, through its interaction with this protein. Also acts as a virulence factor that promotes colonization and suppresses cell death induced by CRN2 as well as callose deposition, a hallmark of basal defense. Interacts with host exocyst component Sec5 and thereby disturbs vesicle trafficking, a cellular process that is important for basal defense. By targeting and stabilizing Sec5 in the cytoplasm, the exocyst complex is thus out of balance and not able to mediate the focal secretion of PR-1 and callose. The sequence is that of RxLR effector protein Avr1 from Phytophthora infestans (strain T30-4) (Potato late blight agent).